The sequence spans 253 residues: Imidazole glycerol phosphate synthase subunit HisF (253 aa).

Residues D11 and D130 contribute to the active site.

The protein belongs to the HisA/HisF family. As to quaternary structure, heterodimer of HisH and HisF.

Its subcellular location is the cytoplasm. It carries out the reaction 5-[(5-phospho-1-deoxy-D-ribulos-1-ylimino)methylamino]-1-(5-phospho-beta-D-ribosyl)imidazole-4-carboxamide + L-glutamine = D-erythro-1-(imidazol-4-yl)glycerol 3-phosphate + 5-amino-1-(5-phospho-beta-D-ribosyl)imidazole-4-carboxamide + L-glutamate + H(+). Its pathway is amino-acid biosynthesis; L-histidine biosynthesis; L-histidine from 5-phospho-alpha-D-ribose 1-diphosphate: step 5/9. In terms of biological role, IGPS catalyzes the conversion of PRFAR and glutamine to IGP, AICAR and glutamate. The HisF subunit catalyzes the cyclization activity that produces IGP and AICAR from PRFAR using the ammonia provided by the HisH subunit. The protein is Imidazole glycerol phosphate synthase subunit HisF of Acidobacterium capsulatum (strain ATCC 51196 / DSM 11244 / BCRC 80197 / JCM 7670 / NBRC 15755 / NCIMB 13165 / 161).